A 334-amino-acid polypeptide reads, in one-letter code: L-lactate dehydrogenase B chain (334 aa).

NAD(+) is bound by residues 30–58 and Arg100; that span reads GQVG…LEDK. Substrate contacts are provided by Arg107, Asn139, and Arg170. Residue Asn139 coordinates NAD(+). Catalysis depends on His194, which acts as the Proton acceptor. Position 249 (Thr249) interacts with substrate.

Belongs to the LDH/MDH superfamily. LDH family. In terms of assembly, homotetramer.

Its subcellular location is the cytoplasm. The catalysed reaction is (S)-lactate + NAD(+) = pyruvate + NADH + H(+). It functions in the pathway fermentation; pyruvate fermentation to lactate; (S)-lactate from pyruvate: step 1/1. In terms of biological role, interconverts simultaneously and stereospecifically pyruvate and lactate with concomitant interconversion of NADH and NAD(+). This Squalus acanthias (Spiny dogfish) protein is L-lactate dehydrogenase B chain (ldhb).